Consider the following 680-residue polypeptide: WD repeat-containing protein 48 homolog (680 aa).

WD repeat units follow at residues 26–65 (QHRN…SEKY), 71–110 (HHND…CMST), 113–152 (THRD…ALTA), 164–203 (GSKD…RSMK), 206–245 (GHTE…CVQT), 248–287 (VHKE…NKTL), 290–329 (EEQA…RCTM), and 350–389 (KGGA…KKEQ). A disordered region spans residues 592–616 (ETTPSGGNANNSLQNSQSDANSEGS).

Belongs to the WD repeat WDR48 family. Catalytic component of the Usp12-46 deubiquitylase complex consisting of Usp12-46, Wdr20 and Uaf1; regulatory subunit that, together wtih Wdr20, stabilizes Usp12-46. The Usp12-46 deubiquitylase complex associates with arr/arrow; the interaction leads to deubiquitination and stabilization of arr/arrow.

Its function is as follows. Regulatory component of the Usp12-46 deubiquitylase complex. activates deubiquitination by increasing the catalytic turnover without increasing the affinity of deubiquitinating enzymes for the substrate. The complex deubiquitylates the wg/wingless-signaling receptor arr/arrow, which stabilizes the receptor and increases its concentration at the cell surface; this enhances the sensitivity of cells to wg/wingless-signal stimulation. This increases the amplitude and spatial range of the signaling response to the wg/wingless morphogen gradient, facilitating the precise concentration-dependent regulation of its target genes. Together with Wdr20 and Usp12-46 required for wg/wingless-mediated signaling in the wing imaginal disc and for wg/wingless-dependent regulation of intestinal stem cell proliferation. The protein is WD repeat-containing protein 48 homolog of Drosophila yakuba (Fruit fly).